A 266-amino-acid polypeptide reads, in one-letter code: Glutamate racemase (266 aa).

Residues 9-10 and 41-42 each bind substrate; these read DS and YG. C73 serves as the catalytic Proton donor/acceptor. 74–75 contacts substrate; the sequence is NS. C183 acts as the Proton donor/acceptor in catalysis. 184–185 serves as a coordination point for substrate; the sequence is TH.

It belongs to the aspartate/glutamate racemases family.

It carries out the reaction L-glutamate = D-glutamate. It participates in cell wall biogenesis; peptidoglycan biosynthesis. Functionally, provides the (R)-glutamate required for cell wall biosynthesis. The sequence is that of Glutamate racemase from Shewanella halifaxensis (strain HAW-EB4).